A 249-amino-acid polypeptide reads, in one-letter code: Type III pantothenate kinase (249 aa).

6 to 13 (DCGNSFIK) is an ATP binding site. Residues Tyr-93 and 100 to 103 (GLDR) contribute to the substrate site. Asp-102 serves as the catalytic Proton acceptor. Asp-122 serves as a coordination point for K(+). Thr-125 provides a ligand contact to ATP. Thr-181 lines the substrate pocket.

Belongs to the type III pantothenate kinase family. As to quaternary structure, homodimer. NH4(+) serves as cofactor. It depends on K(+) as a cofactor.

It localises to the cytoplasm. The enzyme catalyses (R)-pantothenate + ATP = (R)-4'-phosphopantothenate + ADP + H(+). It participates in cofactor biosynthesis; coenzyme A biosynthesis; CoA from (R)-pantothenate: step 1/5. Functionally, catalyzes the phosphorylation of pantothenate (Pan), the first step in CoA biosynthesis. The chain is Type III pantothenate kinase from Pseudomonas fluorescens (strain SBW25).